Here is a 616-residue protein sequence, read N- to C-terminus: Dihydroxy-acid dehydratase (616 aa).

Asp81 contacts Mg(2+). Cys122 contributes to the [2Fe-2S] cluster binding site. The Mg(2+) site is built by Asp123 and Lys124. Lys124 carries the post-translational modification N6-carboxylysine. Residue Cys195 coordinates [2Fe-2S] cluster. Position 491 (Glu491) interacts with Mg(2+). Catalysis depends on Ser517, which acts as the Proton acceptor.

The protein belongs to the IlvD/Edd family. Homodimer. [2Fe-2S] cluster serves as cofactor. Mg(2+) is required as a cofactor.

The catalysed reaction is (2R)-2,3-dihydroxy-3-methylbutanoate = 3-methyl-2-oxobutanoate + H2O. It catalyses the reaction (2R,3R)-2,3-dihydroxy-3-methylpentanoate = (S)-3-methyl-2-oxopentanoate + H2O. It participates in amino-acid biosynthesis; L-isoleucine biosynthesis; L-isoleucine from 2-oxobutanoate: step 3/4. The protein operates within amino-acid biosynthesis; L-valine biosynthesis; L-valine from pyruvate: step 3/4. Its function is as follows. Functions in the biosynthesis of branched-chain amino acids. Catalyzes the dehydration of (2R,3R)-2,3-dihydroxy-3-methylpentanoate (2,3-dihydroxy-3-methylvalerate) into 2-oxo-3-methylpentanoate (2-oxo-3-methylvalerate) and of (2R)-2,3-dihydroxy-3-methylbutanoate (2,3-dihydroxyisovalerate) into 2-oxo-3-methylbutanoate (2-oxoisovalerate), the penultimate precursor to L-isoleucine and L-valine, respectively. In Escherichia coli (strain 55989 / EAEC), this protein is Dihydroxy-acid dehydratase.